We begin with the raw amino-acid sequence, 715 residues long: DNA ligase (715 aa).

NAD(+) contacts are provided by residues 47–51 (DADYD), 96–97 (SL), and glutamate 128. Lysine 130 functions as the N6-AMP-lysine intermediate in the catalytic mechanism. NAD(+) contacts are provided by arginine 151, glutamate 188, lysine 306, and lysine 330. Zn(2+) is bound by residues cysteine 435, cysteine 438, cysteine 453, and cysteine 459. A BRCT domain is found at 637–715 (RRDTAVAGKT…EDEWLALIGN (79 aa)).

It belongs to the NAD-dependent DNA ligase family. LigA subfamily. Requires Mg(2+) as cofactor. Mn(2+) serves as cofactor.

It catalyses the reaction NAD(+) + (deoxyribonucleotide)n-3'-hydroxyl + 5'-phospho-(deoxyribonucleotide)m = (deoxyribonucleotide)n+m + AMP + beta-nicotinamide D-nucleotide.. DNA ligase that catalyzes the formation of phosphodiester linkages between 5'-phosphoryl and 3'-hydroxyl groups in double-stranded DNA using NAD as a coenzyme and as the energy source for the reaction. It is essential for DNA replication and repair of damaged DNA. The polypeptide is DNA ligase (Rhodopseudomonas palustris (strain TIE-1)).